Consider the following 391-residue polypeptide: Phosphoglycerate kinase (391 aa).

Residues 21–23 (DLN), Arg36, 59–62 (HLGR), Arg113, and Arg146 each bind substrate. ATP is bound by residues Lys197, Glu319, and 345-348 (GGDT).

Belongs to the phosphoglycerate kinase family. In terms of assembly, monomer.

Its subcellular location is the cytoplasm. The catalysed reaction is (2R)-3-phosphoglycerate + ATP = (2R)-3-phospho-glyceroyl phosphate + ADP. The protein operates within carbohydrate degradation; glycolysis; pyruvate from D-glyceraldehyde 3-phosphate: step 2/5. The chain is Phosphoglycerate kinase from Stenotrophomonas maltophilia (strain K279a).